A 471-amino-acid polypeptide reads, in one-letter code: Alpha-galactosidase 2 (471 aa).

An N-terminal signal peptide occupies residues 1–18 (MFAFYFLTACISLKGVFG). Residues Cys-42 and Cys-74 are joined by a disulfide bond. 2 residues coordinate substrate: Asp-72 and Asp-73. Residue Asn-105 is glycosylated (N-linked (GlcNAc...) asparagine). A disulfide bridge connects residues Cys-121 and Cys-151. Lys-147 contributes to the substrate binding site. Asp-149 serves as the catalytic Nucleophile. Asn-175 is a glycosylation site (N-linked (GlcNAc...) asparagine). Arg-205 provides a ligand contact to substrate. Asp-209 functions as the Proton donor in the catalytic mechanism. Disulfide bonds link Cys-221–Cys-237 and Cys-223–Cys-230. Gln-251 is a binding site for substrate. Residues Asn-270, Asn-370, Asn-403, Asn-413, Asn-422, Asn-435, and Asn-454 are each glycosylated (N-linked (GlcNAc...) asparagine).

Belongs to the glycosyl hydrolase 27 family. Homotetramer.

It localises to the secreted. It catalyses the reaction Hydrolysis of terminal, non-reducing alpha-D-galactose residues in alpha-D-galactosides, including galactose oligosaccharides, galactomannans and galactolipids.. In Saccharomyces cerevisiae (Baker's yeast), this protein is Alpha-galactosidase 2 (MEL2).